A 160-amino-acid polypeptide reads, in one-letter code: S-ribosylhomocysteine lyase (160 aa).

3 residues coordinate Fe cation: H57, H61, and C127.

It belongs to the LuxS family. In terms of assembly, homodimer. Requires Fe cation as cofactor.

It catalyses the reaction S-(5-deoxy-D-ribos-5-yl)-L-homocysteine = (S)-4,5-dihydroxypentane-2,3-dione + L-homocysteine. Involved in the synthesis of autoinducer 2 (AI-2) which is secreted by bacteria and is used to communicate both the cell density and the metabolic potential of the environment. The regulation of gene expression in response to changes in cell density is called quorum sensing. Catalyzes the transformation of S-ribosylhomocysteine (RHC) to homocysteine (HC) and 4,5-dihydroxy-2,3-pentadione (DPD). The polypeptide is S-ribosylhomocysteine lyase (Streptococcus pyogenes serotype M4 (strain MGAS10750)).